The chain runs to 638 residues: Dihydrolipoyllysine-residue acetyltransferase component of pyruvate dehydrogenase complex (638 aa).

Lipoyl-binding domains follow at residues 2 to 74 (SEII…IELE) and 117 to 191 (SQEV…LTLR). Residue Lys40 is modified to N6-lipoyllysine. A compositionally biased stretch (low complexity) spans 90–117 (PAAPTQAVDEAEAPSPGASATPAPAAAS). A disordered region spans residues 90 to 119 (PAAPTQAVDEAEAPSPGASATPAPAAASQE). Position 157 is an N6-lipoyllysine (Lys157). A disordered region spans residues 201-220 (APAAAAAASPAPAPLAPAAA). The Lipoyl-binding 3 domain occupies 222–296 (PQEVKVPDIG…GTGDQILTLR (75 aa)). Lys262 bears the N6-lipoyllysine mark. The span at 301–320 (APSGPRARGSPGQAAAAPGA) shows a compositional bias: low complexity. The interval 301-336 (APSGPRARGSPGQAAAAPGAAPAPAPVGAPSRNGAK) is disordered. In terms of domain architecture, Peripheral subunit-binding (PSBD) spans 338–375 (HAGPAVRQLAREFGVELAAINSTGPRGRILKEDVQAYV). Positions 382–638 (AKEAPAAGAA…LLADIRAILL (257 aa)) are catalytic. Residue His611 is part of the active site.

Belongs to the 2-oxoacid dehydrogenase family. Forms a 24-polypeptide structural core with octahedral symmetry. (R)-lipoate is required as a cofactor.

The enzyme catalyses N(6)-[(R)-dihydrolipoyl]-L-lysyl-[protein] + acetyl-CoA = N(6)-[(R)-S(8)-acetyldihydrolipoyl]-L-lysyl-[protein] + CoA. Functionally, the pyruvate dehydrogenase complex catalyzes the overall conversion of pyruvate to acetyl-CoA and CO(2). It contains multiple copies of three enzymatic components: pyruvate dehydrogenase (E1), dihydrolipoamide acetyltransferase (E2) and lipoamide dehydrogenase (E3). The protein is Dihydrolipoyllysine-residue acetyltransferase component of pyruvate dehydrogenase complex of Azotobacter vinelandii.